The sequence spans 619 residues: ATP-dependent zinc metalloprotease FtsH (619 aa).

The Cytoplasmic segment spans residues 1–11; the sequence is MSNTDPQPPQK. A helical membrane pass occupies residues 12–32; the sequence is LPLNWVVWTLAVALMLYYLPA. Over 33–120 the chain is Periplasmic; that stretch reads MRDRPEPAIK…EVKEGHDASS (88 aa). The chain crosses the membrane as a helical span at residues 121 to 141; the sequence is SKVILLSYLPWIMFMIILFWL. Over 142–619 the chain is Cytoplasmic; sequence SRRTFRNFSG…IDECLQTGAS (478 aa). 216–223 lines the ATP pocket; that stretch reads GPPGTGKT. Histidine 437 lines the Zn(2+) pocket. Glutamate 438 is a catalytic residue. Histidine 441 and aspartate 513 together coordinate Zn(2+).

The protein in the central section; belongs to the AAA ATPase family. It in the C-terminal section; belongs to the peptidase M41 family. As to quaternary structure, homohexamer. It depends on Zn(2+) as a cofactor.

The protein resides in the cell inner membrane. Functionally, acts as a processive, ATP-dependent zinc metallopeptidase for both cytoplasmic and membrane proteins. Plays a role in the quality control of integral membrane proteins. This Hahella chejuensis (strain KCTC 2396) protein is ATP-dependent zinc metalloprotease FtsH.